We begin with the raw amino-acid sequence, 78 residues long: RNA-binding protein Hfq (78 aa).

Residues 10–69 form the Sm domain; it reads DPFLNALRREHVPVSIYLVNGIKLQGQVESFDQYVVLLKNTVTQMVYKHAISTVVPARPV.

It belongs to the Hfq family. As to quaternary structure, homohexamer.

In terms of biological role, RNA chaperone that binds small regulatory RNA (sRNAs) and mRNAs to facilitate mRNA translational regulation in response to envelope stress, environmental stress and changes in metabolite concentrations. Also binds with high specificity to tRNAs. This is RNA-binding protein Hfq from Dechloromonas aromatica (strain RCB).